A 145-amino-acid polypeptide reads, in one-letter code: SsrA-binding protein (145 aa).

The protein belongs to the SmpB family.

It is found in the cytoplasm. Its function is as follows. Required for rescue of stalled ribosomes mediated by trans-translation. Binds to transfer-messenger RNA (tmRNA), required for stable association of tmRNA with ribosomes. tmRNA and SmpB together mimic tRNA shape, replacing the anticodon stem-loop with SmpB. tmRNA is encoded by the ssrA gene; the 2 termini fold to resemble tRNA(Ala) and it encodes a 'tag peptide', a short internal open reading frame. During trans-translation Ala-aminoacylated tmRNA acts like a tRNA, entering the A-site of stalled ribosomes, displacing the stalled mRNA. The ribosome then switches to translate the ORF on the tmRNA; the nascent peptide is terminated with the 'tag peptide' encoded by the tmRNA and targeted for degradation. The ribosome is freed to recommence translation, which seems to be the essential function of trans-translation. This chain is SsrA-binding protein, found in Mycoplasma genitalium (strain ATCC 33530 / DSM 19775 / NCTC 10195 / G37) (Mycoplasmoides genitalium).